We begin with the raw amino-acid sequence, 426 residues long: Serine--tRNA ligase (426 aa).

233–235 (TSE) contacts L-serine. 264-266 (RAE) contributes to the ATP binding site. Glu287 contributes to the L-serine binding site. An ATP-binding site is contributed by 351 to 354 (EISS). Ser387 serves as a coordination point for L-serine.

Belongs to the class-II aminoacyl-tRNA synthetase family. Type-1 seryl-tRNA synthetase subfamily. Homodimer. The tRNA molecule binds across the dimer.

The protein resides in the cytoplasm. It catalyses the reaction tRNA(Ser) + L-serine + ATP = L-seryl-tRNA(Ser) + AMP + diphosphate + H(+). It carries out the reaction tRNA(Sec) + L-serine + ATP = L-seryl-tRNA(Sec) + AMP + diphosphate + H(+). Its pathway is aminoacyl-tRNA biosynthesis; selenocysteinyl-tRNA(Sec) biosynthesis; L-seryl-tRNA(Sec) from L-serine and tRNA(Sec): step 1/1. Its function is as follows. Catalyzes the attachment of serine to tRNA(Ser). Is also able to aminoacylate tRNA(Sec) with serine, to form the misacylated tRNA L-seryl-tRNA(Sec), which will be further converted into selenocysteinyl-tRNA(Sec). The sequence is that of Serine--tRNA ligase from Stenotrophomonas maltophilia (strain R551-3).